A 158-amino-acid chain; its full sequence is SsrA-binding protein (158 aa).

Residues 135 to 158 (DKRKTLKDRDWERDKQRGFKKDLD) are disordered. Over residues 141-158 (KDRDWERDKQRGFKKDLD) the composition is skewed to basic and acidic residues.

It belongs to the SmpB family.

The protein resides in the cytoplasm. In terms of biological role, required for rescue of stalled ribosomes mediated by trans-translation. Binds to transfer-messenger RNA (tmRNA), required for stable association of tmRNA with ribosomes. tmRNA and SmpB together mimic tRNA shape, replacing the anticodon stem-loop with SmpB. tmRNA is encoded by the ssrA gene; the 2 termini fold to resemble tRNA(Ala) and it encodes a 'tag peptide', a short internal open reading frame. During trans-translation Ala-aminoacylated tmRNA acts like a tRNA, entering the A-site of stalled ribosomes, displacing the stalled mRNA. The ribosome then switches to translate the ORF on the tmRNA; the nascent peptide is terminated with the 'tag peptide' encoded by the tmRNA and targeted for degradation. The ribosome is freed to recommence translation, which seems to be the essential function of trans-translation. In Psychrobacter cryohalolentis (strain ATCC BAA-1226 / DSM 17306 / VKM B-2378 / K5), this protein is SsrA-binding protein.